Reading from the N-terminus, the 454-residue chain is tRNA-2-methylthio-N(6)-dimethylallyladenosine synthase (454 aa).

In terms of domain architecture, MTTase N-terminal spans 6–122; sequence RRYHITTFGC…LQDLLQEVLA (117 aa). Residues Cys15, Cys51, Cys85, Cys157, Cys161, and Cys164 each coordinate [4Fe-4S] cluster. The region spanning 143-380 is the Radical SAM core domain; sequence RESTVTAWVN…NHLVAIKAAE (238 aa). Positions 383–447 constitute a TRAM domain; that stretch reads QRYLGRIEEV…AFSLTGEPVK (65 aa).

The protein belongs to the methylthiotransferase family. MiaB subfamily. Monomer. [4Fe-4S] cluster is required as a cofactor.

The protein resides in the cytoplasm. It catalyses the reaction N(6)-dimethylallyladenosine(37) in tRNA + (sulfur carrier)-SH + AH2 + 2 S-adenosyl-L-methionine = 2-methylsulfanyl-N(6)-dimethylallyladenosine(37) in tRNA + (sulfur carrier)-H + 5'-deoxyadenosine + L-methionine + A + S-adenosyl-L-homocysteine + 2 H(+). Functionally, catalyzes the methylthiolation of N6-(dimethylallyl)adenosine (i(6)A), leading to the formation of 2-methylthio-N6-(dimethylallyl)adenosine (ms(2)i(6)A) at position 37 in tRNAs that read codons beginning with uridine. The polypeptide is tRNA-2-methylthio-N(6)-dimethylallyladenosine synthase (Gloeothece citriformis (strain PCC 7424) (Cyanothece sp. (strain PCC 7424))).